The following is a 114-amino-acid chain: MSDIDQIPLTFTDAAAKKVKSLIEGEDNPNLRLRVYITGGGCSGFQYGFTFDDKINEGDLTIENQNVGLIVDPMSLQYLIGGSVDYTEGLDGSRFVVQNPNASSTCGCGSSFSI.

Cys42, Cys106, and Cys108 together coordinate iron-sulfur cluster.

Belongs to the HesB/IscA family. Homodimer. Iron-sulfur cluster serves as cofactor.

Functionally, required for insertion of 4Fe-4S clusters for at least IspG. The sequence is that of Iron-sulfur cluster insertion protein ErpA from Haemophilus ducreyi (strain 35000HP / ATCC 700724).